We begin with the raw amino-acid sequence, 41 residues long: Large ribosomal subunit protein bL36 (41 aa).

This sequence belongs to the bacterial ribosomal protein bL36 family.

The sequence is that of Large ribosomal subunit protein bL36 from Dinoroseobacter shibae (strain DSM 16493 / NCIMB 14021 / DFL 12).